An 83-amino-acid polypeptide reads, in one-letter code: Apolipoprotein C-I (83 aa).

A signal peptide spans 1 to 26; sequence MRLFLSLPVLVVVLSIVLEGPAPAQG.

Belongs to the apolipoprotein C1 family. In terms of tissue distribution, synthesized mainly in liver and to a minor degree in intestine. Also found in the lung and spleen.

It localises to the secreted. In terms of biological role, inhibitor of lipoprotein binding to the low density lipoprotein (LDL) receptor, LDL receptor-related protein, and very low density lipoprotein (VLDL) receptor. Associates with high density lipoproteins (HDL) and the triacylglycerol-rich lipoproteins in the plasma and makes up about 10% of the protein of the VLDL and 2% of that of HDL. Appears to interfere directly with fatty acid uptake and is also the major plasma inhibitor of cholesteryl ester transfer protein (CETP). Binds free fatty acids and reduces their intracellular esterification. Modulates the interaction of APOE with beta-migrating VLDL and inhibits binding of beta-VLDL to the LDL receptor-related protein. This chain is Apolipoprotein C-I (APOC1), found in Homo sapiens (Human).